The chain runs to 427 residues: MELLKALLLLSGVLGALAEFCVIPKMDGQLVEKLGQRLLPWMDRLSSEQLNPSIYVGLRLSSMQAGTKENLYLHNLKLHYQQCLLRSTSSDDNSGCQTKISGGSLALYLLALRANCELLGSRKGDRMVSQLKWFLEDEKKAIGHHHEGHPHTSYYQYGLSILALCVHRKRVHDSVVGKLLYAVEHDYFTYQGHLSVDTEAMAGLAFTCLERFNFNSDLRPRITTAIETVREKILKAQAPEGYFGNIYSTPLALQMLMTSPGVGLGPACLKARKSLLLSLQDGAFQNPMMISQLLPVLNHKTYLNLISPDCQAPRVMLVPATEDPVHLSEVSVTLKVSSVLPPYERTVSVFAGASLEDVLNRARDLGEFTYGTQASLSGPYLTSVLGKEAGDREYWQLLRVPDTPLLQGIADYKPKNGETIELRLVKM.

Positions 1–18 are cleaved as a signal peptide; sequence MELLKALLLLSGVLGALA. 3 disulfide bridges follow: Cys21–Cys268, Cys116–Cys310, and Cys165–Cys208. Residues 152–156, His193, 193–197, Asn245, Ser248, Gln292, and 395–397 contribute to the cob(II)alamin site; these read TSYYQ, HLSVD, and WQL.

Belongs to the eukaryotic cobalamin transport proteins family. Interacts with CD320 (via LDL-receptor class A domains).

The protein localises to the secreted. Functionally, primary vitamin B12-binding and transport protein. Delivers cobalamin to cells. This is Transcobalamin-2 (Tcn2) from Rattus norvegicus (Rat).